The following is a 210-amino-acid chain: Helix-loop-helix protein 26 (210 aa).

Residues 1 to 15 are compositionally biased toward low complexity; that stretch reads MSSSPTSSSSGSPSS. A disordered region spans residues 1–33; the sequence is MSSSPTSSSSGSPSSHGHRSETEKQRRDDTNDL. The bHLH domain maps to 14 to 65; it reads SSHGHRSETEKQRRDDTNDLLNEFKKIVQKSESEKLSKEEVLFRIVKLLSGI. Over residues 18-33 the composition is skewed to basic and acidic residues; that stretch reads HRSETEKQRRDDTNDL.

In terms of assembly, homodimer; binds to DNA as a homodimer. Expressed in intestinal cells (at protein level).

It is found in the nucleus. Its function is as follows. As a homodimer binds DNA via the E-box sequence 5'-CACGTG-3'. Represses lag-2 transcription during embryogenesis via Notch signaling, in an unc-37-dependent manner. Also represses tbx-37 independent of Notch signaling. In the intestine, plays a role in probiotic-mediated protection against infections by pathogens such as S.enterica. This is most likely by positively regulating the expression of genes such as bar-1 upon exposure to probiotic bacteria such as the E.faecium. The protein is Helix-loop-helix protein 26 of Caenorhabditis elegans.